The chain runs to 253 residues: Zwei Ig domain protein zig-4 (253 aa).

The signal sequence occupies residues 1 to 16 (MFAIALLSFLVVLINA). 2 consecutive Ig-like C2-type domains span residues 43-146 (PAKI…AEVE) and 162-245 (PEIV…TFLY). 2 disulfides stabilise this stretch: C67-C130 and C183-C229.

In terms of tissue distribution, expressed in PVT, ASK, BAG, M2 and ASI neurons. In L1 larvae, expressed in pharyngeal ectoderm and mesoderm.

The protein localises to the secreted. Required for maintaining axon position of PVQ and PVP neurons postembryonically in the ventral nerve cord (VNC) by preventing axons drifting into the opposite side of the VNC that could occur during body growth and movement. This Caenorhabditis elegans protein is Zwei Ig domain protein zig-4.